A 380-amino-acid polypeptide reads, in one-letter code: Chaperone protein DnaJ (380 aa).

Residues 5 to 70 (DFYEVLGVSR…QKRAAYDQYG (66 aa)) form the J domain. The CR-type zinc-finger motif lies at 135 to 213 (GCEKDIEIPT…CHGDGRVQKT (79 aa)). Zn(2+) is bound by residues C148, C151, C165, C168, C187, C190, C201, and C204. CXXCXGXG motif repeat units lie at residues 148-155 (CEPCDGTG), 165-172 (CSTCHGQG), 187-194 (CPTCHGKG), and 201-208 (CNSCHGDG).

This sequence belongs to the DnaJ family. In terms of assembly, homodimer. It depends on Zn(2+) as a cofactor.

Its subcellular location is the cytoplasm. Functionally, participates actively in the response to hyperosmotic and heat shock by preventing the aggregation of stress-denatured proteins and by disaggregating proteins, also in an autonomous, DnaK-independent fashion. Unfolded proteins bind initially to DnaJ; upon interaction with the DnaJ-bound protein, DnaK hydrolyzes its bound ATP, resulting in the formation of a stable complex. GrpE releases ADP from DnaK; ATP binding to DnaK triggers the release of the substrate protein, thus completing the reaction cycle. Several rounds of ATP-dependent interactions between DnaJ, DnaK and GrpE are required for fully efficient folding. Also involved, together with DnaK and GrpE, in the DNA replication of plasmids through activation of initiation proteins. The chain is Chaperone protein DnaJ from Aliivibrio salmonicida (strain LFI1238) (Vibrio salmonicida (strain LFI1238)).